Consider the following 293-residue polypeptide: Glutamyl-Q tRNA(Asp) synthetase (293 aa).

Residues 9 to 13 (RFAPS) and E45 each bind L-glutamate. The 'HIGH' region motif lies at 12 to 22 (PSPSGELHFGS). Residues C101, C103, Y115, and C119 each coordinate Zn(2+). Residues Y172 and R190 each coordinate L-glutamate. Positions 228 to 232 (KLSKQ) match the 'KMSKS' region motif. Residue K231 participates in ATP binding.

Belongs to the class-I aminoacyl-tRNA synthetase family. GluQ subfamily. Zn(2+) is required as a cofactor.

Functionally, catalyzes the tRNA-independent activation of glutamate in presence of ATP and the subsequent transfer of glutamate onto a tRNA(Asp). Glutamate is transferred on the 2-amino-5-(4,5-dihydroxy-2-cyclopenten-1-yl) moiety of the queuosine in the wobble position of the QUC anticodon. The sequence is that of Glutamyl-Q tRNA(Asp) synthetase from Klebsiella pneumoniae (strain 342).